The chain runs to 359 residues: MAGPPGDDIFRATLAAVAPGTPFRDGLERILRGHTGALIVLGHDKVVEGLCTGGFELDVEFSATRLRELAKMDGAIVLSSDLQRIVRAAVHLVPDPTVPTEESGTRHRTAERVAKQTEYPVISVSQSMHIIALYVAGRRYVLDGSAAILSRANQALATLERYKLRLDEVAGTLSALEIEDLVTVRDAISVSQRLEMVRRIADEIEGYVVELGTDGRLLSLQLEELMAGVETERELTVRDYLPAGSKAGSAAQVLSELSAMSPTDLLDLTVLARVIGFSGGADILDRQISPRGYRMLAKVPRLPRMVVDRLVDHFGTLQKLLAAGVDDLQAVDGVGETRARAVREGLSRLAESSILERYV.

A DAC domain is found at 7 to 146; sequence DDIFRATLAA…GRRYVLDGSA (140 aa). ATP contacts are provided by residues Gly-74, Leu-92, and 105–109; that span reads TRHRT.

This sequence belongs to the DisA family. Homooctamer. It depends on Mg(2+) as a cofactor.

It catalyses the reaction 2 ATP = 3',3'-c-di-AMP + 2 diphosphate. Participates in a DNA-damage check-point that is active prior to asymmetric division when DNA is damaged. DisA forms globular foci that rapidly scan along the chromosomes during sporulation, searching for lesions. When a lesion is present, DisA pauses at the lesion site. This triggers a cellular response that culminates in a temporary block in sporulation initiation. Functionally, also has diadenylate cyclase activity, catalyzing the condensation of 2 ATP molecules into cyclic di-AMP (c-di-AMP). c-di-AMP acts as a signaling molecule that couples DNA integrity with progression of sporulation. The rise in c-di-AMP level generated by DisA while scanning the chromosome, operates as a positive signal that advances sporulation; upon encountering a lesion, the DisA focus arrests at the damaged site and halts c-di-AMP synthesis. This is DNA integrity scanning protein DisA from Frankia alni (strain DSM 45986 / CECT 9034 / ACN14a).